Consider the following 248-residue polypeptide: Segregation and condensation protein A (248 aa).

The protein belongs to the ScpA family. As to quaternary structure, component of a cohesin-like complex composed of ScpA, ScpB and the Smc homodimer, in which ScpA and ScpB bind to the head domain of Smc. The presence of the three proteins is required for the association of the complex with DNA.

The protein localises to the cytoplasm. Functionally, participates in chromosomal partition during cell division. May act via the formation of a condensin-like complex containing Smc and ScpB that pull DNA away from mid-cell into both cell halves. The sequence is that of Segregation and condensation protein A from Clostridium perfringens (strain ATCC 13124 / DSM 756 / JCM 1290 / NCIMB 6125 / NCTC 8237 / Type A).